The primary structure comprises 313 residues: Ribosomal RNA small subunit methyltransferase H (313 aa).

S-adenosyl-L-methionine is bound by residues 35–37 (GGH), aspartate 55, phenylalanine 80, aspartate 102, and glutamine 109.

Belongs to the methyltransferase superfamily. RsmH family.

It localises to the cytoplasm. The catalysed reaction is cytidine(1402) in 16S rRNA + S-adenosyl-L-methionine = N(4)-methylcytidine(1402) in 16S rRNA + S-adenosyl-L-homocysteine + H(+). In terms of biological role, specifically methylates the N4 position of cytidine in position 1402 (C1402) of 16S rRNA. This is Ribosomal RNA small subunit methyltransferase H from Shewanella baltica (strain OS223).